A 303-amino-acid chain; its full sequence is Cyclin-dependent kinase 4 (303 aa).

Position 2 is an N-acetylalanine (A2). Residues 6-295 (YEPVAEIGVG…AFRALQHSYL (290 aa)) enclose the Protein kinase domain. ATP contacts are provided by residues 12–20 (IGVGAYGTV) and K35. The required for binding D-type cyclins stretch occupies residues 50 to 56 (PVSTVRE). Residue D140 is the Proton acceptor of the active site. Phosphothreonine; by CAK is present on T172. S300 is modified (phosphoserine).

Belongs to the protein kinase superfamily. CMGC Ser/Thr protein kinase family. CDC2/CDKX subfamily. As to quaternary structure, component of the D-CDK4 complex, composed of CDK4 and some D-type G1 cyclin (CCND1, CCND2 or CCND3). Interacts directly in the complex with CCND1, CCND2 or CCND3. Interacts with SEI1 and ZNF655. Forms a ternary complex, cyclin D-CDK4-CDKN1B, involved in modulating CDK4 enzymatic activity. Interacts directly with CDKN1B (phosphorylated on 'Tyr-88' and 'Tyr-89'); the interaction allows assembly of the cyclin D-CDK4 complex, Thr-172 phosphorylation, nuclear translocation and enhances the cyclin D-CDK4 complex activity. CDK4 activity is either inhibited or enhanced depending on stoichiometry of complex. The non-tyrosine-phosphorylated form of CDKN1B prevents T-loop phosphorylation of CDK4 producing inactive CDK4. Interacts (unphosphorylated form) with CDK2. Also forms ternary complexes with CDKN1A or CDKN2A. Interacts directly with CDKN1A (via its N-terminal); the interaction promotes the assembly of the cyclin D-CDK4 complex, its nuclear translocation and promotes the cyclin D-dependent enzyme activity of CDK4. Interacts with CCND1; the interaction is prevented with the binding of CCND1 to INSM1 during cell cycle progression. Probably forms a complex composed of chaperones HSP90 and HSP70, co-chaperones CDC37, PPP5C, TSC1 and client protein TSC2, CDK4, AKT, RAF1 and NR3C1; this complex does not contain co-chaperones STIP1/HOP and PTGES3/p23. Interacts with CEBPA (when phosphorylated). Interacts with FNIP1 and FNIP2. As to expression, expressed in fetal and adult lung. Also expressed in brain, heart, liver, skeletal muscle and testes.

The protein resides in the cytoplasm. The protein localises to the nucleus. It localises to the nucleus membrane. The enzyme catalyses L-seryl-[protein] + ATP = O-phospho-L-seryl-[protein] + ADP + H(+). It catalyses the reaction L-threonyl-[protein] + ATP = O-phospho-L-threonyl-[protein] + ADP + H(+). With respect to regulation, both phosphorylation at Thr-172 and binding of a D-type cyclin are necessary for enzymatic activity. Full activation of the cyclin-D-CDK4 complex appears to require other factors such as recruitment of the substrate via a substrate recruitment motif, and/or formation of the CDKN1B ternary complex. Inhibited by INK4 family members. In resting cells, the non-tyrosine-phosphorylated form of CDKN1B prevents phosphorylation at Thr-172 and inactivation, while, in proliferating cells, tyrosine phosphorylation of CDKN1B allows phosphorylation of Thr-172 of CDK4 and subsequent activation. Ser/Thr-kinase component of cyclin D-CDK4 (DC) complexes that phosphorylate and inhibit members of the retinoblastoma (RB) protein family including RB1 and regulate the cell-cycle during G(1)/S transition. Phosphorylation of RB1 allows dissociation of the transcription factor E2F from the RB/E2F complexes and the subsequent transcription of E2F target genes which are responsible for the progression through the G(1) phase. Hypophosphorylates RB1 in early G(1) phase. Cyclin D-CDK4 complexes are major integrators of various mitogenenic and antimitogenic signals. Also phosphorylates SMAD3 in a cell-cycle-dependent manner and represses its transcriptional activity. Component of the ternary complex, cyclin D/CDK4/CDKN1B, required for nuclear translocation and activity of the cyclin D-CDK4 complex. In Rattus norvegicus (Rat), this protein is Cyclin-dependent kinase 4 (Cdk4).